Consider the following 319-residue polypeptide: MASPKKKLQGLVAATITPMTEHGEINFSVIGQYVDYLVEVQGVKNIFVNGTTGEGLSLSISERCQVAEEWVTKGRNKLDQIVIHVGALSLKESQELAQHAAKIGADGIAVIAPFFLKPWNKDNLINFLKEVAAAAPALPFYYYHIPALTGVKIRAEELLDGIQDKIPTFQGLKFSDTDLLDFGQCVDQNHQRQFAFLFGVDEQLLSALVMGATGAVGSTYNYLGRKTNQMLEAFERKDFSSALNHQFCIQRFINFVVKLGFGVSQTKAIMTLVSGIPMGPPRLPLQKASREFTDNAKAKLKSLDVLSFTDLKDGNLEAC.

Positions 51 and 52 each coordinate aceneuramate. Catalysis depends on Tyr143, which acts as the Proton donor. The active-site Schiff-base intermediate with substrate is Lys173. 5 residues coordinate aceneuramate: Ser175, Gly199, Asp201, Glu202, and Ser218.

The protein belongs to the DapA family. NanA subfamily. In terms of assembly, homotetramer.

The protein resides in the cytoplasm. It catalyses the reaction aceneuramate = aldehydo-N-acetyl-D-mannosamine + pyruvate. It functions in the pathway amino-sugar metabolism; N-acetylneuraminate degradation. Functionally, catalyzes the cleavage of N-acetylneuraminic acid (sialic acid) to form pyruvate and N-acetylmannosamine via a Schiff base intermediate. It prevents sialic acids from being recycled and returning to the cell surface. Involved in the N-glycolylneuraminic acid (Neu5Gc) degradation pathway. The polypeptide is N-acetylneuraminate lyase (Sus scrofa (Pig)).